Reading from the N-terminus, the 336-residue chain is Casein kinase II subunit alpha (336 aa).

Residues 32 to 317 (YEVVRKIGRG…AKEAMAHPYF (286 aa)) enclose the Protein kinase domain. ATP-binding positions include 38 to 46 (IGRGKYSEV) and Lys61. Asp149 acts as the Proton acceptor in catalysis.

Belongs to the protein kinase superfamily. Ser/Thr protein kinase family. CK2 subfamily. Tetramer composed of two alpha chains, one beta chain and one beta' chain.

It carries out the reaction L-seryl-[protein] + ATP = O-phospho-L-seryl-[protein] + ADP + H(+). It catalyses the reaction L-threonyl-[protein] + ATP = O-phospho-L-threonyl-[protein] + ADP + H(+). Catalytic subunit of a constitutively active serine/threonine-protein kinase complex that phosphorylates a large number of substrates containing acidic residues C-terminal to the phosphorylated serine or threonine. Phosphorylates the frq clock protein thus regulating the circadian clock. This Neurospora crassa (strain ATCC 24698 / 74-OR23-1A / CBS 708.71 / DSM 1257 / FGSC 987) protein is Casein kinase II subunit alpha (cka).